Consider the following 310-residue polypeptide: Olfactory receptor 4K14 (310 aa).

The Extracellular segment spans residues 1–25 (MDPQNYSLVSEFVLHGLCTSRHLQN). Asn-5 carries N-linked (GlcNAc...) asparagine glycosylation. A helical transmembrane segment spans residues 26-49 (FFFIFFFGVYVAIMLGNLLILVTV). Residues 50 to 58 (ISDPCLHSS) are Cytoplasmic-facing. The helical transmembrane segment at 59-80 (PMYFLLGNLAFLDMWLASFATP) threads the bilayer. Residues 81–101 (KMIRDFLSDQKLISFGGCMAQ) are Extracellular-facing. Residues Cys-98 and Cys-190 are joined by a disulfide bond. The chain crosses the membrane as a helical span at residues 102 to 121 (IFFLHFTGGAEMVLLVSMAY). The Cytoplasmic segment spans residues 122-140 (DRYVAICKPLHYMTLMSWQ). Residues 141–159 (TCIRLVLASWVVGFVHSIS) traverse the membrane as a helical segment. Topologically, residues 160 to 196 (QVAFTVNLPYCGPNEVDSFFCDLPLVIKLACMDTYVL) are extracellular. A helical transmembrane segment spans residues 197-220 (GIIMISDSGLLSLSCFLLLLISYT). Topologically, residues 221–236 (VILLAIRQRAAGSTSK) are cytoplasmic. Residues 237–259 (ALSTCSAHIMVVTLFFGPCIFVY) traverse the membrane as a helical segment. The Extracellular segment spans residues 260 to 270 (VRPFSRFSVDK). Residues 271 to 290 (LLSVFYTIFTPLLNPIIYTL) traverse the membrane as a helical segment. Topologically, residues 291 to 310 (RNEEMKAAMKKLQNRRVTFQ) are cytoplasmic.

The protein belongs to the G-protein coupled receptor 1 family.

The protein resides in the cell membrane. Functionally, odorant receptor. The sequence is that of Olfactory receptor 4K14 (OR4K14) from Homo sapiens (Human).